Reading from the N-terminus, the 321-residue chain is Genome polyprotein (321 aa).

The Cytoplasmic segment spans residues 1–52 (RNLGKVIDTLTCGFADLMGYIPLVGAPLGGAARALAHGVRVLEDGVNYATGN). The segment at 6–57 (VIDTLTCGFADLMGYIPLVGAPLGGAARALAHGVRVLEDGVNYATGNLPGCS) is interaction with APOA2. The interval 48 to 51 (YATG) is important for lipid droplets localization. The helical transmembrane segment at 53–73 (LPGCSFSLFLLALLSCLTVPA) threads the bilayer. The propeptide at 62–75 (LLALLSCLTVPASA) is ER anchor for the core protein, removed in mature form by host signal peptidase. The Lumenal segment spans residues 74-242 (SAYQVRNSTG…AGAHWGVLAG (169 aa)). N-linked (GlcNAc...) asparagine; by host glycans are attached at residues Asn-80, Asn-93, and Asn-118. Positions 149–180 (LVGSATLCSALYVGDLCGSIFLVGQLFTFSPR) are important for fusion. Asn-189 is a glycosylation site (N-linked (GlcNAc...) asparagine; by host). A helical transmembrane segment spans residues 243 to 263 (IAYFSMVGNWAKVLVVLLLFA). The Lumenal portion of the chain corresponds to 264–321 (GVDAETTVTGGSAAHGALGIASLFNQGARQNIQLINTNGSWHINSTALNCNDSLNTGW). The interval 268 to 294 (ETTVTGGSAAHGALGIASLFNQGARQN) is HVR1. Asn-301, Asn-307, and Asn-314 each carry an N-linked (GlcNAc...) (high mannose) asparagine; by host glycan.

This sequence belongs to the hepacivirus polyprotein family. In terms of assembly, homooligomer. Interacts with E1 (via C-terminus). Interacts with the non-structural protein 5A. Interacts (via N-terminus) with host STAT1 (via SH2 domain); this interaction results in decreased STAT1 phosphorylation and ubiquitin-mediated proteasome-dependent STAT1 degradation, leading to decreased IFN-stimulated gene transcription. Interacts with host STAT3; this interaction constitutively activates STAT3. Interacts with host LTBR receptor. Interacts with host TNFRSF1A receptor and possibly induces apoptosis. Interacts with host HNRPK. Interacts with host YWHAE. Interacts with host UBE3A/E6AP. Interacts with host DDX3X. Interacts with host APOA2. Interacts with host RXRA protein. Interacts with host SP110 isoform 3/Sp110b; this interaction sequesters the transcriptional corepressor SP110 away from the nucleus. Interacts with host CREB3 nuclear transcription protein; this interaction triggers cell transformation. Interacts with host ACY3. Interacts with host C1QR1. Interacts with host RBM24; this interaction, which enhances the interaction of the mature core protein with 5'-UTR, may inhibit viral translation and favor replication. Interacts with host EIF2AK2/PKR; this interaction induces the autophosphorylation of EIF2AK2. Part of the viral assembly initiation complex composed of NS2, E1, E2, NS3, NS4A, NS5A and the mature core protein. Forms a heterodimer with envelope glycoprotein E2. Interacts with mature core protein. Interacts with protease NS2. The heterodimer E1/E2 interacts with host CLDN1; this interaction plays a role in viral entry into host cell. Interacts with host SPSB2 (via C-terminus). Part of the viral assembly initiation complex composed of NS2, E1, E2, NS3, NS4A, NS5A and the mature core protein. As to quaternary structure, forms a heterodimer with envelope glycoprotein E1. Interacts with host CD81 and SCARB1 receptors; these interactions play a role in viral entry into host cell. Interacts with host EIF2AK2/PKR; this interaction inhibits EIF2AK2 and probably allows the virus to evade the innate immune response. Interacts with host CD209/DC-SIGN and CLEC4M/DC-SIGNR. Interact with host SPCS1; this interaction is essential for viral particle assembly. Interacts with protease NS2. The heterodimer E1/E2 interacts with host CLDN1; this interaction plays a role in viral entry into host cell. Part of the viral assembly initiation complex composed of NS2, E1, E2, NS3, NS4A, NS5A and the mature core protein. In terms of processing, specific enzymatic cleavages in vivo yield mature proteins. The structural proteins, core, E1, E2 and p7 are produced by proteolytic processing by host signal peptidases. The core protein precursor is synthesized as a 23 kDa, which is retained in the ER membrane through the hydrophobic signal peptide. Cleavage by the signal peptidase releases the 21 kDa mature core protein. The cleavage of the core protein precursor occurs between aminoacids 176 and 188 but the exact cleavage site is not known. Some degraded forms of the core protein appear as well during the course of infection. The other proteins (p7, NS2, NS3, NS4A, NS4B, NS5A and NS5B) are cleaved by the viral proteases. Autoprocessing between NS2 and NS3 is mediated by the NS2 cysteine protease catalytic domain and regulated by the NS3 N-terminal domain. Post-translationally, phosphorylated by host PKC and PKA. Ubiquitinated; mediated by UBE3A and leading to core protein subsequent proteasomal degradation. In terms of processing, highly N-glycosylated.

It is found in the host endoplasmic reticulum membrane. Its subcellular location is the host mitochondrion membrane. The protein localises to the virion. It localises to the host cytoplasm. The protein resides in the host nucleus. It is found in the host lipid droplet. Its subcellular location is the virion membrane. Its function is as follows. Packages viral RNA to form a viral nucleocapsid, and promotes virion budding. Participates in the viral particle production as a result of its interaction with the non-structural protein 5A. Binds RNA and may function as a RNA chaperone to induce the RNA structural rearrangements taking place during virus replication. Modulates viral translation initiation by interacting with viral IRES and 40S ribosomal subunit. Affects various cell signaling pathways, host immunity and lipid metabolism. Prevents the establishment of cellular antiviral state by blocking the interferon-alpha/beta (IFN-alpha/beta) and IFN-gamma signaling pathways and by blocking the formation of phosphorylated STAT1 and promoting ubiquitin-mediated proteasome-dependent degradation of STAT1. Activates STAT3 leading to cellular transformation. Regulates the activity of cellular genes, including c-myc and c-fos. May repress the promoter of p53, and sequester CREB3 and SP110 isoform 3/Sp110b in the cytoplasm. Represses cell cycle negative regulating factor CDKN1A, thereby interrupting an important check point of normal cell cycle regulation. Targets transcription factors involved in the regulation of inflammatory responses and in the immune response: suppresses TNF-induced NF-kappa-B activation, and activates AP-1. Binds to dendritic cells (DCs) via C1QR1, resulting in down-regulation of T-lymphocytes proliferation. Alters lipid metabolism by interacting with hepatocellular proteins involved in lipid accumulation and storage. Induces up-regulation of FAS promoter activity, and thereby contributes to the increased triglyceride accumulation in hepatocytes (steatosis). Forms a heterodimer with envelope glycoprotein E2, which mediates virus attachment to the host cell, virion internalization through clathrin-dependent endocytosis and fusion with host membrane. Fusion with the host cell is most likely mediated by both E1 and E2, through conformational rearrangements of the heterodimer required for fusion rather than a classical class II fusion mechanism. E1/E2 heterodimer binds host apolipoproteins such as APOB and ApoE thereby forming a lipo-viro-particle (LVP). APOE associated to the LVP allows the initial virus attachment to cell surface receptors such as the heparan sulfate proteoglycans (HSPGs), syndecan-1 (SDC1), syndecan-1 (SDC2), the low-density lipoprotein receptor (LDLR) and scavenger receptor class B type I (SCARB1). The cholesterol transfer activity of SCARB1 allows E2 exposure and binding of E2 to SCARB1 and the tetraspanin CD81. E1/E2 heterodimer binding on CD81 activates the epithelial growth factor receptor (EGFR) signaling pathway. Diffusion of the complex E1-E2-EGFR-SCARB1-CD81 to the cell lateral membrane allows further interaction with Claudin 1 (CLDN1) and occludin (OCLN) to finally trigger HCV entry. In terms of biological role, forms a heterodimer with envelope glycoprotein E1, which mediates virus attachment to the host cell, virion internalization through clathrin-dependent endocytosis and fusion with host membrane. Fusion with the host cell is most likely mediated by both E1 and E2, through conformational rearrangements of the heterodimer required for fusion rather than a classical class II fusion mechanism. The interaction between envelope glycoprotein E2 and host apolipoprotein E/APOE allows the proper assembly, maturation and infectivity of the viral particles. This interaction is probably promoted via the up-regulation of cellular autophagy by the virus. E1/E2 heterodimer binds host apolipoproteins such as APOB and APOE thereby forming a lipo-viro-particle (LVP). APOE associated to the LVP allows the initial virus attachment to cell surface receptors such as the heparan sulfate proteoglycans (HSPGs), syndecan-1 (SDC1), syndecan-1 (SDC2), the low-density lipoprotein receptor (LDLR) and scavenger receptor class B type I (SCARB1). The cholesterol transfer activity of SCARB1 allows E2 exposure and binding of E2 to SCARB1 and the tetraspanin CD81. E1/E2 heterodimer binding on CD81 activates the epithelial growth factor receptor (EGFR) signaling pathway. Diffusion of the complex E1-E2-EGFR-SCARB1-CD81 to the cell lateral membrane allows further interaction with Claudin 1 (CLDN1) and occludin (OCLN) to finally trigger HCV entry. Inhibits host EIF2AK2/PKR activation, preventing the establishment of an antiviral state. Viral ligand for CD209/DC-SIGN and CLEC4M/DC-SIGNR, which are respectively found on dendritic cells (DCs), and on liver sinusoidal endothelial cells and macrophage-like cells of lymph node sinuses. These interactions allow the capture of circulating HCV particles by these cells and subsequent facilitated transmission to permissive cells such as hepatocytes and lymphocyte subpopulations. The polypeptide is Genome polyprotein (Homo sapiens (Human)).